The following is a 204-amino-acid chain: Pre-mRNA leakage protein 1 (204 aa).

The region spanning 104–172 is the FHA domain; that stretch reads YLVGRELGHS…NGTCLNNVVI (69 aa).

Belongs to the pre-mRNA retention and splicing (RES) complex composed of at least BUD13, IST3 and PML1.

The protein resides in the cytoplasm. It localises to the nucleus. Functionally, required for efficient splicing and pre-mRNA nuclear retention. The sequence is that of Pre-mRNA leakage protein 1 (PML1) from Saccharomyces cerevisiae (strain ATCC 204508 / S288c) (Baker's yeast).